The primary structure comprises 172 residues: Co-chaperone protein HscB homolog (172 aa).

The 68-residue stretch at 2–69 (NHFELFNLPV…DSRAAYLLAL (68 aa)) folds into the J domain.

The protein belongs to the HscB family. In terms of assembly, interacts with HscA and stimulates its ATPase activity.

In terms of biological role, co-chaperone involved in the maturation of iron-sulfur cluster-containing proteins. Seems to help targeting proteins to be folded toward HscA. This chain is Co-chaperone protein HscB homolog, found in Acinetobacter baumannii (strain AB307-0294).